The following is a 102-amino-acid chain: MAKQKIRIRLKAYDHRVIDQSAEKIVETAKRSGADVSGPIPLPTERSVYTVIRAVHKYKDSREQFEQRTHKRLIDIVNPTPKTVDALMGLNLPSGVDIEIKL.

The protein belongs to the universal ribosomal protein uS10 family. As to quaternary structure, part of the 30S ribosomal subunit.

In terms of biological role, involved in the binding of tRNA to the ribosomes. This Staphylococcus saprophyticus subsp. saprophyticus (strain ATCC 15305 / DSM 20229 / NCIMB 8711 / NCTC 7292 / S-41) protein is Small ribosomal subunit protein uS10.